The sequence spans 193 residues: UPF0301 protein SAV_5129 (193 aa).

It belongs to the UPF0301 (AlgH) family.

This is UPF0301 protein SAV_5129 from Streptomyces avermitilis (strain ATCC 31267 / DSM 46492 / JCM 5070 / NBRC 14893 / NCIMB 12804 / NRRL 8165 / MA-4680).